Here is a 347-residue protein sequence, read N- to C-terminus: N-acetyl-gamma-glutamyl-phosphate reductase (347 aa).

Cys-152 is a catalytic residue.

It belongs to the NAGSA dehydrogenase family. Type 1 subfamily.

Its subcellular location is the cytoplasm. The enzyme catalyses N-acetyl-L-glutamate 5-semialdehyde + phosphate + NADP(+) = N-acetyl-L-glutamyl 5-phosphate + NADPH + H(+). It participates in amino-acid biosynthesis; L-arginine biosynthesis; N(2)-acetyl-L-ornithine from L-glutamate: step 3/4. In terms of biological role, catalyzes the NADPH-dependent reduction of N-acetyl-5-glutamyl phosphate to yield N-acetyl-L-glutamate 5-semialdehyde. The chain is N-acetyl-gamma-glutamyl-phosphate reductase from Neisseria meningitidis serogroup C (strain 053442).